We begin with the raw amino-acid sequence, 409 residues long: MQRFFSARSILGYAVKTRRRSFSSRSSSLLFDDTQLQFKESVSKFAQDNIAPHAERIDKTNSFPKDVNLWKLMGEFNLHGITAPEEYGGLGLGYLYHCIAMEEISRASGSVALSYGAHSNLCINQLVRNGTAAQKEKYLPKLISGEHVGALAMSEPNAGSDVVGMKCKAEKVDGGYILNGNKMWCTNGPSAETLVVYAKTDTKAGSKGITAFIIEKGMTGFSTAQKLDKLGMRGSDTCELVFENCFVPEENILDKEGKGVYVLMSGLDLERLVLAAGPLGIMQACLDNVLPYIRQREQFGRPVGEFQFIQGKVADMYTALQSSRSYVYSVARDCDNGKVDPKDCAGTILCAAERATQVALQAIQCLGGNGYINEYATGRLLRDAKLYEIGAGTSEIRRIVIGRELFKEE.

Residues 1 to 22 (MQRFFSARSILGYAVKTRRRSF) constitute a mitochondrion transit peptide. Residues 151-160 (LAMSEPNAGS) and 184-186 (WCT) contribute to the FAD site. Residue serine 160 participates in substrate binding. Residues 206-207 (SK), tyrosine 261, and 268-271 (DLER) contribute to the substrate site. Glutamate 270 serves as the catalytic Proton acceptor. FAD is bound by residues arginine 296, glutamine 307, and 364-368 (QCLGG). 391 to 392 (AG) lines the substrate pocket. Residue 393 to 395 (TSE) participates in FAD binding.

It belongs to the acyl-CoA dehydrogenase family. As to quaternary structure, homodimer. The cofactor is FAD. In terms of tissue distribution, expressed in leaves, stems and flowers. Not detected in roots.

The protein resides in the mitochondrion. The enzyme catalyses 3-methylbutanoyl-CoA + oxidized [electron-transfer flavoprotein] + H(+) = 3-methylbut-2-enoyl-CoA + reduced [electron-transfer flavoprotein]. Its pathway is amino-acid degradation; L-leucine degradation; (S)-3-hydroxy-3-methylglutaryl-CoA from 3-isovaleryl-CoA: step 1/3. Functionally, involved in degradation of the branched-chain amino acids, phytol and lysine for the supply of carbon and electrons to the ETF/ETFQO complex during dark-induced sugar starvation. This is Isovaleryl-CoA dehydrogenase, mitochondrial (IVD) from Arabidopsis thaliana (Mouse-ear cress).